The following is an 86-amino-acid chain: uncharacterized protein (86 aa).

Positions 1–21 (MLSNSTSRNRHSKHNKKNTRE) are disordered. Positions 8 to 17 (RNRHSKHNKK) are enriched in basic residues.

This is an uncharacterized protein from Acidianus convivator (ATV).